The primary structure comprises 91 residues: Alpha-defensin-related sequence 10 (91 aa).

An N-terminal signal peptide occupies residues 1-19 (MKKLVLLSAFVLLAFQVQA). A propeptide spanning residues 20-65 (DSIQNTDEETKTEEQPGEENQAMSVSFGDPEGSALQDAAVGMARPC) is cleaved from the precursor. The disordered stretch occupies residues 21-52 (SIQNTDEETKTEEQPGEENQAMSVSFGDPEGS). 7 tandem repeats follow at residues 65-67 (CPP), 68-70 (CPS), 71-73 (CPS), 74-76 (CPW), 77-79 (CPM), 80-82 (CPR), and 83-85 (CPS). The 7 X 3 AA tandem repeats of C-P-X stretch occupies residues 65–85 (CPPCPSCPSCPWCPMCPRCPS).

This sequence belongs to the alpha-defensin family. Paneth cells of the small bowel.

The protein localises to the secreted. In terms of biological role, apparent precursor of a secreted, cationic, proline- and cysteine-rich peptide that contains Cys-Pro-Xaa repeats. Unlike cryptdin, the proposed mature peptide region lacks the structural motif characteristic of defensins. It may have microbicidal activities. This Mus musculus (Mouse) protein is Alpha-defensin-related sequence 10 (Defa-rs10).